The sequence spans 270 residues: 4-hydroxy-tetrahydrodipicolinate reductase (270 aa).

Position 7 to 12 (7 to 12) interacts with NAD(+); the sequence is GANGKM. Residue Arg34 participates in NADP(+) binding. NAD(+) is bound by residues 97–99 and 121–124; these read GTT and SGNM. Catalysis depends on His155, which acts as the Proton donor/acceptor. Residue His156 coordinates (S)-2,3,4,5-tetrahydrodipicolinate. Catalysis depends on Lys159, which acts as the Proton donor. Residue 165-166 coordinates (S)-2,3,4,5-tetrahydrodipicolinate; it reads GT.

This sequence belongs to the DapB family.

It is found in the cytoplasm. The enzyme catalyses (S)-2,3,4,5-tetrahydrodipicolinate + NAD(+) + H2O = (2S,4S)-4-hydroxy-2,3,4,5-tetrahydrodipicolinate + NADH + H(+). It catalyses the reaction (S)-2,3,4,5-tetrahydrodipicolinate + NADP(+) + H2O = (2S,4S)-4-hydroxy-2,3,4,5-tetrahydrodipicolinate + NADPH + H(+). It functions in the pathway amino-acid biosynthesis; L-lysine biosynthesis via DAP pathway; (S)-tetrahydrodipicolinate from L-aspartate: step 4/4. In terms of biological role, catalyzes the conversion of 4-hydroxy-tetrahydrodipicolinate (HTPA) to tetrahydrodipicolinate. The protein is 4-hydroxy-tetrahydrodipicolinate reductase of Bartonella quintana (strain Toulouse) (Rochalimaea quintana).